The following is a 1097-amino-acid chain: Transmembrane protein 132D (1097 aa).

The first 30 residues, 1–30 (MCPSEMGTLWYLWSPVLISLAALFSKVTEG), serve as a signal peptide directing secretion. The Extracellular segment spans residues 31–913 (RGILESIQRF…PDQAAKGLSD (883 aa)). Over residues 233-245 (DERGDCAKEDSRK) the composition is skewed to basic and acidic residues. 2 disordered regions span residues 233 to 263 (DERG…SPPL) and 885 to 906 (SFPD…DPDQ). The chain crosses the membrane as a helical span at residues 914 to 934 (LEIGMYALLGVFCLAILVFLI). Topologically, residues 935–1097 (NCVTFALKYR…SCMERLHEHV (163 aa)) are cytoplasmic. The tract at residues 1021 to 1042 (MLTDDKEQKSEPPTSPTSKRKR) is disordered.

The protein belongs to the TMEM132 family. As to expression, expressed in mature oligodendrocytes in the brain.

It localises to the membrane. In terms of biological role, regulates neuronal morphology via inhibition of the WAVE regulatory complex (WCR), a complex that controls F-actin cytoskeletal dynamics. The sequence is that of Transmembrane protein 132D (Tmem132d) from Rattus norvegicus (Rat).